The chain runs to 503 residues: Probable cytosol aminopeptidase (503 aa).

K270 and D275 together coordinate Mn(2+). K282 is a catalytic residue. The Mn(2+) site is built by D293, D352, and E354. R356 is an active-site residue.

This sequence belongs to the peptidase M17 family. Requires Mn(2+) as cofactor.

It localises to the cytoplasm. The catalysed reaction is Release of an N-terminal amino acid, Xaa-|-Yaa-, in which Xaa is preferably Leu, but may be other amino acids including Pro although not Arg or Lys, and Yaa may be Pro. Amino acid amides and methyl esters are also readily hydrolyzed, but rates on arylamides are exceedingly low.. It carries out the reaction Release of an N-terminal amino acid, preferentially leucine, but not glutamic or aspartic acids.. In terms of biological role, presumably involved in the processing and regular turnover of intracellular proteins. Catalyzes the removal of unsubstituted N-terminal amino acids from various peptides. The protein is Probable cytosol aminopeptidase of Escherichia fergusonii (strain ATCC 35469 / DSM 13698 / CCUG 18766 / IAM 14443 / JCM 21226 / LMG 7866 / NBRC 102419 / NCTC 12128 / CDC 0568-73).